Consider the following 250-residue polypeptide: tRNA (guanine-N(1)-)-methyltransferase (250 aa).

Residues glycine 112 and 132–137 each bind S-adenosyl-L-methionine; that span reads IGDFVL.

It belongs to the RNA methyltransferase TrmD family. In terms of assembly, homodimer.

The protein localises to the cytoplasm. The catalysed reaction is guanosine(37) in tRNA + S-adenosyl-L-methionine = N(1)-methylguanosine(37) in tRNA + S-adenosyl-L-homocysteine + H(+). Its function is as follows. Specifically methylates guanosine-37 in various tRNAs. This is tRNA (guanine-N(1)-)-methyltransferase from Marinomonas sp. (strain MWYL1).